A 355-amino-acid chain; its full sequence is Elongation factor Ts (355 aa).

The tract at residues 82 to 85 is involved in Mg(2+) ion dislocation from EF-Tu; that stretch reads TDFV.

The protein belongs to the EF-Ts family.

Its subcellular location is the cytoplasm. In terms of biological role, associates with the EF-Tu.GDP complex and induces the exchange of GDP to GTP. It remains bound to the aminoacyl-tRNA.EF-Tu.GTP complex up to the GTP hydrolysis stage on the ribosome. The protein is Elongation factor Ts of Helicobacter acinonychis (strain Sheeba).